The chain runs to 188 residues: Holliday junction branch migration complex subunit RuvA (188 aa).

The interval 1–63 (MIEIIEGIYK…QEDMTIYGFD (63 aa)) is domain I. The tract at residues 64-142 (SKVKKETFEK…VVEVNEEMLE (79 aa)) is domain II. A region of interest (flexible linker) is located at residue Glu-142. Residues 142-188 (EAIEALVSLGYSKTQARNAVSKVLKESPNISNVSKIIKEALKILAKI) are domain III.

It belongs to the RuvA family. Homotetramer. Forms an RuvA(8)-RuvB(12)-Holliday junction (HJ) complex. HJ DNA is sandwiched between 2 RuvA tetramers; dsDNA enters through RuvA and exits via RuvB. An RuvB hexamer assembles on each DNA strand where it exits the tetramer. Each RuvB hexamer is contacted by two RuvA subunits (via domain III) on 2 adjacent RuvB subunits; this complex drives branch migration. In the full resolvosome a probable DNA-RuvA(4)-RuvB(12)-RuvC(2) complex forms which resolves the HJ.

It localises to the cytoplasm. Its function is as follows. The RuvA-RuvB-RuvC complex processes Holliday junction (HJ) DNA during genetic recombination and DNA repair, while the RuvA-RuvB complex plays an important role in the rescue of blocked DNA replication forks via replication fork reversal (RFR). RuvA specifically binds to HJ cruciform DNA, conferring on it an open structure. The RuvB hexamer acts as an ATP-dependent pump, pulling dsDNA into and through the RuvAB complex. HJ branch migration allows RuvC to scan DNA until it finds its consensus sequence, where it cleaves and resolves the cruciform DNA. The protein is Holliday junction branch migration complex subunit RuvA of Fervidobacterium nodosum (strain ATCC 35602 / DSM 5306 / Rt17-B1).